Here is a 305-residue protein sequence, read N- to C-terminus: Lipoyl synthase (305 aa).

[4Fe-4S] cluster contacts are provided by Cys41, Cys46, Cys52, Cys68, Cys72, Cys75, and Ser281. In terms of domain architecture, Radical SAM core spans 54–270 (GARRTATFMI…RKVAMDKGFK (217 aa)). Basic and acidic residues predominate over residues 283-298 (HADEQVNEAAKEKQRQ). The interval 283 to 305 (HADEQVNEAAKEKQRQGEAQLNS) is disordered.

It belongs to the radical SAM superfamily. Lipoyl synthase family. [4Fe-4S] cluster serves as cofactor.

The protein resides in the cytoplasm. It carries out the reaction [[Fe-S] cluster scaffold protein carrying a second [4Fe-4S](2+) cluster] + N(6)-octanoyl-L-lysyl-[protein] + 2 oxidized [2Fe-2S]-[ferredoxin] + 2 S-adenosyl-L-methionine + 4 H(+) = [[Fe-S] cluster scaffold protein] + N(6)-[(R)-dihydrolipoyl]-L-lysyl-[protein] + 4 Fe(3+) + 2 hydrogen sulfide + 2 5'-deoxyadenosine + 2 L-methionine + 2 reduced [2Fe-2S]-[ferredoxin]. It functions in the pathway protein modification; protein lipoylation via endogenous pathway; protein N(6)-(lipoyl)lysine from octanoyl-[acyl-carrier-protein]. Its function is as follows. Catalyzes the radical-mediated insertion of two sulfur atoms into the C-6 and C-8 positions of the octanoyl moiety bound to the lipoyl domains of lipoate-dependent enzymes, thereby converting the octanoylated domains into lipoylated derivatives. This Staphylococcus aureus (strain bovine RF122 / ET3-1) protein is Lipoyl synthase.